The primary structure comprises 399 residues: MVEAGTRDPLESALLDSRYLVQAKIASGGTSTVYRGLDVRLDRPVALKVMDSRYAGDEQFLTRFRLEARAVARLNNRALVAVYDQGKDGRHPFLVMELIEGGTLRELLIERGPMPPHAVVAVLRPVLGGLAAAHRAGLVHRDVKPENILISDDGDVKLADFGLVRAVAAASITSTGVILGTAAYLSPEQVRDGNADPRSDVYSVGVLVYELLTGHTPFTGDSALSIAYQRLDADVPRASAVIDGVPPQFDELVACATARNPADRYADAIAMGADLEAIAEELALPEFRVPAPRNSAQHRSAALYRSRITQQGQLGAKPVHHPTRQLTRQPGDCSEPASGSEPEHEPITGQFAGIAIEEFIWARQHARRMVLVWVSVVLAITGLVASAAWTIGSNLSGLL.

Residues 1-368 lie on the Cytoplasmic side of the membrane; sequence MVEAGTRDPL…FIWARQHARR (368 aa). Residues 19 to 278 enclose the Protein kinase domain; the sequence is YLVQAKIASG…IAMGADLEAI (260 aa). Residues 25–33 and Lys-48 contribute to the ATP site; that span reads IASGGTSTV. Thr-32 is modified (phosphothreonine; by autocatalysis). The residue at position 62 (Thr-62) is a Phosphothreonine; by autocatalysis. Residue Asp-142 is the Proton acceptor of the active site. Phosphothreonine; by autocatalysis occurs at positions 173, 175, and 323. Residues 312–346 form a disordered region; that stretch reads GQLGAKPVHHPTRQLTRQPGDCSEPASGSEPEHEP. The chain crosses the membrane as a helical span at residues 369–389; it reads MVLVWVSVVLAITGLVASAAW. Topologically, residues 390-399 are extracellular; it reads TIGSNLSGLL.

The protein belongs to the protein kinase superfamily. Ser/Thr protein kinase family. Autophosphorylated. Thr-173 is required for autophosphorylation and transphosphorylation activities. Thr-175 is not necessary for autophosphorylation activity, but is required for full kinase activity.

It is found in the cell membrane. It catalyses the reaction L-seryl-[protein] + ATP = O-phospho-L-seryl-[protein] + ADP + H(+). The enzyme catalyses L-threonyl-[protein] + ATP = O-phospho-L-threonyl-[protein] + ADP + H(+). Its function is as follows. Phosphorylates the DNA-binding protein MT2231. May be involved in the regulation of cell division and cell envelope biosynthesis. This is Serine/threonine-protein kinase PknL (pknL) from Mycobacterium tuberculosis (strain CDC 1551 / Oshkosh).